Here is a 166-residue protein sequence, read N- to C-terminus: Regulatory protein RecX (166 aa).

It belongs to the RecX family.

It localises to the cytoplasm. In terms of biological role, modulates RecA activity. This Klebsiella pneumoniae (strain 342) protein is Regulatory protein RecX.